Here is a 396-residue protein sequence, read N- to C-terminus: Phosphoglycerate kinase (396 aa).

Substrate-binding positions include 21 to 23, Arg-36, 59 to 62, Arg-113, and Arg-146; these read DLN and HLGR. ATP is bound by residues Lys-197, Glu-319, and 345-348; that span reads GGDT.

The protein belongs to the phosphoglycerate kinase family. As to quaternary structure, monomer.

The protein resides in the cytoplasm. It carries out the reaction (2R)-3-phosphoglycerate + ATP = (2R)-3-phospho-glyceroyl phosphate + ADP. Its pathway is carbohydrate degradation; glycolysis; pyruvate from D-glyceraldehyde 3-phosphate: step 2/5. The chain is Phosphoglycerate kinase from Legionella pneumophila (strain Corby).